The sequence spans 116 residues: Iron-sulfur cluster insertion protein ErpA (116 aa).

Residues cysteine 44, cysteine 108, and cysteine 110 each coordinate iron-sulfur cluster.

Belongs to the HesB/IscA family. In terms of assembly, homodimer. Requires iron-sulfur cluster as cofactor.

Its function is as follows. Required for insertion of 4Fe-4S clusters for at least IspG. In Shewanella putrefaciens (strain CN-32 / ATCC BAA-453), this protein is Iron-sulfur cluster insertion protein ErpA.